Here is a 681-residue protein sequence, read N- to C-terminus: Serine/threonine-protein kinase PAK 6 (681 aa).

Disordered regions lie at residues 1 to 30 (MFRK…DPKE), 200 to 256 (QSSP…ESSL), and 268 to 355 (TAAT…PRTW). The CRIB domain occupies 12-25 (ISAPQNFQHRVHTS). Residues 26-406 (FDPKEGKFVG…VVDQGDPRLL (381 aa)) form a linker region. Composition is skewed to low complexity over residues 201-212 (SSPPGASPPTGT) and 268-278 (TAATAPPSSSK). A compositionally biased stretch (polar residues) spans 308 to 333 (SLPSDQPVGTFSPLTTSDTSSPQKSL). The Protein kinase domain occupies 407–658 (LDSYVKIGEG…AQELLDHPFL (252 aa)). ATP contacts are provided by residues 413 to 421 (IGEGSTGIV) and lysine 436. Aspartate 526 (proton acceptor) is an active-site residue. Serine 560 is subject to Phosphoserine; by autocatalysis.

Belongs to the protein kinase superfamily. STE Ser/Thr protein kinase family. STE20 subfamily. As to quaternary structure, interacts tightly with GTP-bound but not GDP-bound CDC42/p21 and RAC1. Interacts with the androgen receptor AR. Interacts with IQGAP1 and PPM1B. Autophosphorylated. Phosphorylated by MAP2K6/MAPKK6, leading to PAK6 activation.

It is found in the cytoplasm. It localises to the nucleus. It catalyses the reaction L-seryl-[protein] + ATP = O-phospho-L-seryl-[protein] + ADP + H(+). The catalysed reaction is L-threonyl-[protein] + ATP = O-phospho-L-threonyl-[protein] + ADP + H(+). Serine/threonine protein kinase that plays a role in the regulation of gene transcription. The kinase activity is induced by various effectors including AR or MAP2K6/MAPKK6. Phosphorylates the DNA-binding domain of androgen receptor/AR and thereby inhibits AR-mediated transcription. Also inhibits ESR1-mediated transcription. May play a role in cytoskeleton regulation by interacting with IQGAP1. May protect cells from apoptosis through phosphorylation of BAD. This is Serine/threonine-protein kinase PAK 6 (PAK6) from Pongo abelii (Sumatran orangutan).